The following is a 103-amino-acid chain: MSNQRIRIRLKSFDHRLIDQSAQEIVETAKRTGAQVCGPIPMPTRIERFNVLTSPHVNKDARDQYEIRTYKRLIDIVQPTDKTVDALMKLDLAAGVDVQIALG.

The protein belongs to the universal ribosomal protein uS10 family. In terms of assembly, part of the 30S ribosomal subunit.

Its function is as follows. Involved in the binding of tRNA to the ribosomes. The sequence is that of Small ribosomal subunit protein uS10 from Acinetobacter baumannii (strain AB307-0294).